The following is a 75-amino-acid chain: MNHHNSLDSSDITYKTEELLEATTNRYKITVQVANRAKRRKYEDVDIIDDPQIKPVIRAILEMVDEITQPEIISD.

This sequence belongs to the RNA polymerase subunit omega family.

It localises to the plastid. Its subcellular location is the chloroplast. It carries out the reaction RNA(n) + a ribonucleoside 5'-triphosphate = RNA(n+1) + diphosphate. In terms of biological role, may be involved in RNA polymerase activity. In Porphyra purpurea (Red seaweed), this protein is Putative DNA-directed RNA polymerase subunit omega (rpoZ).